A 453-amino-acid polypeptide reads, in one-letter code: tRNA modification GTPase MnmE (453 aa).

3 residues coordinate (6S)-5-formyl-5,6,7,8-tetrahydrofolate: arginine 22, glutamate 79, and lysine 119. The 162-residue stretch at glycine 215–glycine 376 folds into the TrmE-type G domain. Asparagine 225 serves as a coordination point for K(+). Residues asparagine 225–serine 230, threonine 244–threonine 250, aspartate 269–glycine 272, and asparagine 334–aspartate 337 contribute to the GTP site. A Mg(2+)-binding site is contributed by serine 229. Positions 244, 246, and 249 each coordinate K(+). Threonine 250 provides a ligand contact to Mg(2+). Position 453 (lysine 453) interacts with (6S)-5-formyl-5,6,7,8-tetrahydrofolate.

The protein belongs to the TRAFAC class TrmE-Era-EngA-EngB-Septin-like GTPase superfamily. TrmE GTPase family. As to quaternary structure, homodimer. Heterotetramer of two MnmE and two MnmG subunits. The cofactor is K(+).

It is found in the cytoplasm. Its function is as follows. Exhibits a very high intrinsic GTPase hydrolysis rate. Involved in the addition of a carboxymethylaminomethyl (cmnm) group at the wobble position (U34) of certain tRNAs, forming tRNA-cmnm(5)s(2)U34. This Shewanella frigidimarina (strain NCIMB 400) protein is tRNA modification GTPase MnmE.